Consider the following 402-residue polypeptide: Putative RNA-guided DNA endonuclease InsQ (402 aa).

Catalysis depends on residues aspartate 183 and glutamate 267. 4 residues coordinate Zn(2+): cysteine 334, cysteine 337, cysteine 353, and cysteine 356. Residue aspartate 363 is part of the active site.

In the N-terminal section; belongs to the transposase 2 family. It in the C-terminal section; belongs to the transposase 35 family.

Its function is as follows. An RNA-guided dsDNA endonuclease. When guided by an RNA derived from the right-end element of its insertion sequence element (IS), cleaves DNA downstream of the transposon-associated motif (TAM). Cleaves supercoiled and linear DNA in a staggered manner 15-21 bases from the TAM yielding 5'-overhangs. Binds reRNA, an approximately 150 nucleotide base sRNA derived from the 3' end of its own gene, the right end (RE) of the insertion sequence (IS) plus sequence downstream of the IS. Functionally, not required for transposition of the insertion element. The corresponding transposase in strains MG1655 and W3110 is a truncated pseudogene (yncK). This chain is Putative RNA-guided DNA endonuclease InsQ (insQ), found in Escherichia coli (strain K12).